Reading from the N-terminus, the 202-residue chain is Large ribosomal subunit protein bL9 (202 aa).

Residues 176 to 202 (AAGEFFDPDAQHDDEPAAEDDQNAEEK) are disordered. Positions 191–202 (PAAEDDQNAEEK) are enriched in acidic residues.

Belongs to the bacterial ribosomal protein bL9 family.

Functionally, binds to the 23S rRNA. The protein is Large ribosomal subunit protein bL9 of Nitrobacter winogradskyi (strain ATCC 25391 / DSM 10237 / CIP 104748 / NCIMB 11846 / Nb-255).